We begin with the raw amino-acid sequence, 96 residues long: Co-chaperonin GroES (96 aa).

It belongs to the GroES chaperonin family. As to quaternary structure, heptamer of 7 subunits arranged in a ring. Interacts with the chaperonin GroEL.

It is found in the cytoplasm. Functionally, together with the chaperonin GroEL, plays an essential role in assisting protein folding. The GroEL-GroES system forms a nano-cage that allows encapsulation of the non-native substrate proteins and provides a physical environment optimized to promote and accelerate protein folding. GroES binds to the apical surface of the GroEL ring, thereby capping the opening of the GroEL channel. This chain is Co-chaperonin GroES, found in Haemophilus influenzae (strain ATCC 51907 / DSM 11121 / KW20 / Rd).